Here is a 231-residue protein sequence, read N- to C-terminus: Probable septum site-determining protein MinC (231 aa).

Residues 102–125 (KEKAPRPAPAPQAPAQNTTPVTKT) are disordered.

It belongs to the MinC family. In terms of assembly, interacts with MinD and FtsZ.

Its function is as follows. Cell division inhibitor that blocks the formation of polar Z ring septums. Rapidly oscillates between the poles of the cell to destabilize FtsZ filaments that have formed before they mature into polar Z rings. Prevents FtsZ polymerization. This is Probable septum site-determining protein MinC from Escherichia coli O6:K15:H31 (strain 536 / UPEC).